Reading from the N-terminus, the 103-residue chain is uncharacterized protein (103 aa).

Over residues 38 to 51 (TTTTSSTTSASTTS) the composition is skewed to low complexity. A disordered region spans residues 38-70 (TTTTSSTTSASTTSQPSFSLPTSCNSNSPQSNL). The span at 52–70 (QPSFSLPTSCNSNSPQSNL) shows a compositional bias: polar residues.

This is an uncharacterized protein from Dictyostelium discoideum (Social amoeba).